The following is a 309-amino-acid chain: Porphobilinogen deaminase (309 aa).

At cysteine 242 the chain carries S-(dipyrrolylmethanemethyl)cysteine.

It belongs to the HMBS family. As to quaternary structure, monomer. Dipyrromethane is required as a cofactor.

It catalyses the reaction 4 porphobilinogen + H2O = hydroxymethylbilane + 4 NH4(+). It participates in porphyrin-containing compound metabolism; protoporphyrin-IX biosynthesis; coproporphyrinogen-III from 5-aminolevulinate: step 2/4. Functionally, tetrapolymerization of the monopyrrole PBG into the hydroxymethylbilane pre-uroporphyrinogen in several discrete steps. This Legionella pneumophila (strain Paris) protein is Porphobilinogen deaminase.